Here is a 338-residue protein sequence, read N- to C-terminus: Glyceraldehyde-3-phosphate dehydrogenase, cytosolic (338 aa).

NAD(+)-binding positions include 14-15, Asp-36, and Arg-83; that span reads RI. D-glyceraldehyde 3-phosphate contacts are provided by residues 154 to 156, Thr-185, 214 to 215, and Arg-237; these read SCT and TG. Residue Cys-155 is the Nucleophile of the active site. Residue Asn-319 coordinates NAD(+).

Belongs to the glyceraldehyde-3-phosphate dehydrogenase family. Homotetramer.

It localises to the cytoplasm. The catalysed reaction is D-glyceraldehyde 3-phosphate + phosphate + NAD(+) = (2R)-3-phospho-glyceroyl phosphate + NADH + H(+). Its pathway is carbohydrate degradation; glycolysis; pyruvate from D-glyceraldehyde 3-phosphate: step 1/5. Functionally, key enzyme in glycolysis that catalyzes the first step of the pathway by converting D-glyceraldehyde 3-phosphate (G3P) into 3-phospho-D-glyceroyl phosphate. Essential for the maintenance of cellular ATP levels and carbohydrate metabolism. The chain is Glyceraldehyde-3-phosphate dehydrogenase, cytosolic (GAPC) from Ranunculus acris (Meadow buttercup).